Here is a 416-residue protein sequence, read N- to C-terminus: E3 ubiquitin-protein ligase makorin-2 (416 aa).

C3H1-type zinc fingers lie at residues 2-29 (STKQITCRYFMHGVCREGSQCLFSHDLA) and 31-58 (SKPSTICKYYQKGYCAYGTRCRYDHTRP). A compositionally biased stretch (basic and acidic residues) spans 113-122 (NLSGMAERKT). The interval 113-142 (NLSGMAERKTQPSMVSNPGSCSDPQPSPEM) is disordered. Residues 123–136 (QPSMVSNPGSCSDP) are compositionally biased toward polar residues. At Ser139 the chain carries Phosphoserine. A C3H1-type 3 zinc finger spans residues 165 to 192 (SNEQQLCPYAAAGECRFGDACVYLHGEV). The interval 193–222 (CEICRLQVLHPFDPEQRKAHEKICMLTFEH) is makorin-type Cys-His. The RING-type zinc finger occupies 238–292 (CSICMEVILEKASASERRFGILSNCNHTYCLSCIRQWRCAKQFENPIIKSCPECR). The C3H1-type 4 zinc-finger motif lies at 321–350 (GMGKKACKYFEQGKGTCPFGSKCLYRHAYP).

Interacts with PDLIM2 (via LIM zinc-binding domain). Interacts with RELA. Expressed in sperm, with significantly reduced expression in sperm of patients with oligoasthenoteratozoospermia (at protein level). Widely expressed with expression in testis, ovary, small intestine, colon, peripheral blood leukocytes, fetal liver, bone marrow, thymus, lymph node and spleen.

It localises to the cytoplasm. Its subcellular location is the nucleus. The catalysed reaction is S-ubiquitinyl-[E2 ubiquitin-conjugating enzyme]-L-cysteine + [acceptor protein]-L-lysine = [E2 ubiquitin-conjugating enzyme]-L-cysteine + N(6)-ubiquitinyl-[acceptor protein]-L-lysine.. It functions in the pathway protein modification; protein ubiquitination. Functionally, E3 ubiquitin ligase catalyzing the covalent attachment of ubiquitin moieties onto substrate proteins. Promotes the polyubiquitination and proteasome-dependent degradation of RELA/p65, thereby suppressing RELA-mediated NF-kappaB transactivation and negatively regulating inflammatory responses. Plays a role in the regulation of spermiation and in male fertility. The chain is E3 ubiquitin-protein ligase makorin-2 (MKRN2) from Homo sapiens (Human).